The chain runs to 241 residues: Beta-nerve growth factor (241 aa).

Residues 1–18 (MSMLFYTLITAFLIGIQA) form the signal peptide. Positions 19–121 (EPHSESNVPA…PFNRTHRSKR (103 aa)) are excised as a propeptide. Residues N69 and N114 are each glycosylated (N-linked (GlcNAc...) asparagine). Cystine bridges form between C136–C201, C179–C229, and C189–C231. A 1-acyl-sn-glycero-3-phospho-(1D-myo-inositol) is bound by residues Y173 and K209. K209 is an a 1-acyl-sn-glycero-3-phospho-L-serine binding site.

The protein belongs to the NGF-beta family. As to quaternary structure, homodimer. The homodimer interacts with a single NTRK1 chain. The homodimer interacts with a single NGFR chain. The NGF dimer interacts with a single SORCS2 chain (via extracellular domain). The NGF precursor (proNGF) binds to a receptor complex formed by SORT1 and NGFR, which leads to NGF endocytosis. Both mature NGF and the immature NGF precursor (proNGF) interact with SORCS2 and with the heterodimer formed by SORCS2 and NGFR (via extracellular domains). The NGF precursor (proNGF) has much higher affinity for SORCS2 than mature NGF. The NGF precursor (proNGF) has much higher affinity for SORT1 than mature NGF. Interacts with ADAM10 in a divalent cation-dependent manner. Interaction with SORCS3.

It is found in the secreted. The protein localises to the endosome lumen. Functionally, nerve growth factor is important for the development and maintenance of the sympathetic and sensory nervous systems. Extracellular ligand for the NTRK1 and NGFR receptors, activates cellular signaling cascades to regulate neuronal proliferation, differentiation and survival. The immature NGF precursor (proNGF) functions as a ligand for the heterodimeric receptor formed by SORCS2 and NGFR, and activates cellular signaling cascades that lead to inactivation of RAC1 and/or RAC2, reorganization of the actin cytoskeleton and neuronal growth cone collapse. In contrast to mature NGF, the precursor form (proNGF) promotes neuronal apoptosis (in vitro). Inhibits metalloproteinase-dependent proteolysis of platelet glycoprotein VI. Binds lysophosphatidylinositol and lysophosphatidylserine between the two chains of the homodimer. The lipid-bound form promotes histamine relase from mast cells, contrary to the lipid-free form. The chain is Beta-nerve growth factor (NGF) from Homo sapiens (Human).